The following is a 196-amino-acid chain: Rac-like GTP-binding protein RAC13 (196 aa).

13–20 (GDGAVGKT) is a binding site for GTP. Positions 35–43 (YVPTVFDNF) match the Effector region motif. Residues 60–64 (DTAGQ) and 118–121 (TKLD) contribute to the GTP site. Cysteine methyl ester is present on C193. C193 carries the S-geranylgeranyl cysteine lipid modification. Residues 194 to 196 (AFL) constitute a propeptide, removed in mature form.

The protein belongs to the small GTPase superfamily. Rho family.

The protein resides in the cytoplasm. It localises to the membrane. Functionally, could participate in a signal transduction pathway that controls cytoskeletal organization. Inactive GDP-bound Rho GTPases reside in the cytosol, are found in a complex with Rho GDP-dissociation inhibitors (Rho GDIs), and are released from the GDI protein in order to translocate to membranes upon activation. In Gossypium hirsutum (Upland cotton), this protein is Rac-like GTP-binding protein RAC13 (RAC13).